A 174-amino-acid polypeptide reads, in one-letter code: Large ribosomal subunit protein uL10 (174 aa).

It belongs to the universal ribosomal protein uL10 family. As to quaternary structure, part of the ribosomal stalk of the 50S ribosomal subunit. The N-terminus interacts with L11 and the large rRNA to form the base of the stalk. The C-terminus forms an elongated spine to which L12 dimers bind in a sequential fashion forming a multimeric L10(L12)X complex.

Functionally, forms part of the ribosomal stalk, playing a central role in the interaction of the ribosome with GTP-bound translation factors. This chain is Large ribosomal subunit protein uL10, found in Bordetella bronchiseptica (strain ATCC BAA-588 / NCTC 13252 / RB50) (Alcaligenes bronchisepticus).